Reading from the N-terminus, the 472-residue chain is Tryptophanase (472 aa).

Lys-270 carries the post-translational modification N6-(pyridoxal phosphate)lysine.

Belongs to the beta-eliminating lyase family. In terms of assembly, homotetramer. Pyridoxal 5'-phosphate is required as a cofactor.

It catalyses the reaction L-tryptophan + H2O = indole + pyruvate + NH4(+). Its pathway is amino-acid degradation; L-tryptophan degradation via pyruvate pathway; indole and pyruvate from L-tryptophan: step 1/1. This chain is Tryptophanase (tnaA), found in Haemophilus influenzae.